The primary structure comprises 305 residues: Undecaprenyl-diphosphatase (305 aa).

Helical transmembrane passes span 18-38 (GVTELFPVSSLGHAVLVPALV), 55-75 (YLAFIVGLHVATAAALLVFFW), 103-123 (WLIVVGTIPVGLAGLALEQLF), 130-150 (PVPAAAFLLLNGVALYAGEVL), 187-207 (GVLIGAAQILALLPGISRSGI), 225-245 (FSFLLATPIILAAGVYKIPEL), 246-266 (FGPLGAGIGGQVLAGSIASFV), and 284-304 (LTPFAIYCAVAGGASLVWLAL).

It belongs to the UppP family.

The protein localises to the cell membrane. It carries out the reaction di-trans,octa-cis-undecaprenyl diphosphate + H2O = di-trans,octa-cis-undecaprenyl phosphate + phosphate + H(+). In terms of biological role, catalyzes the dephosphorylation of undecaprenyl diphosphate (UPP). Confers resistance to bacitracin. This Mycolicibacterium paratuberculosis (strain ATCC BAA-968 / K-10) (Mycobacterium paratuberculosis) protein is Undecaprenyl-diphosphatase.